We begin with the raw amino-acid sequence, 56 residues long: Serine protease inhibitor Kazal-type 1 (56 aa).

Residues 3 to 56 form the Kazal-like domain; it reads LGREAKCNNNAGGCTKIYNPVCGTDGNTYPNECMLCVENQKRQMPVLIQRSGPC. 3 cysteine pairs are disulfide-bonded: C9–C38, C16–C35, and C24–C56.

The protein resides in the secreted. In terms of biological role, serine protease inhibitor which exhibits anti-trypsin activity. In the pancreas, protects against trypsin-catalyzed premature activation of zymogens. Its function is as follows. In the male reproductive tract, binds to sperm heads where it modulates sperm capacitance by inhibiting calcium uptake and nitrogen oxide (NO) production. The sequence is that of Serine protease inhibitor Kazal-type 1 (SPINK1) from Equus caballus (Horse).